The sequence spans 258 residues: MLEQIIATKKKEIETLTLSKPLQNVQRRSLSAALKKPNRSIGLIAEVKKASPSKGLIRPDFHPVAIAKAYEKAGADAISVLTDERYFQGHRGYLSDIKQAVQLPILRKDFIIDRIQIEESVRIGADAILLIGEALPAKTLYELYQEAYDKGLECLVEVHQRETLENILDIFTPEIIGINNRDLHTFVTSLETTSKVIPFVPSGSVIVSESGISTSHDLKTVQTYGADAVLVGESLMRKDDVEAAIYELFREVESIAGP.

It belongs to the TrpC family.

The enzyme catalyses 1-(2-carboxyphenylamino)-1-deoxy-D-ribulose 5-phosphate + H(+) = (1S,2R)-1-C-(indol-3-yl)glycerol 3-phosphate + CO2 + H2O. It participates in amino-acid biosynthesis; L-tryptophan biosynthesis; L-tryptophan from chorismate: step 4/5. The sequence is that of Indole-3-glycerol phosphate synthase from Geobacillus sp. (strain WCH70).